The sequence spans 296 residues: Probable AP endonuclease (296 aa).

C16 and C20 are joined by a disulfide. 8 residues coordinate Zn(2+): H78, H115, E142, H182, H218, D231, H233, and E271.

Belongs to the AP endonuclease 2 family. Zn(2+) serves as cofactor.

It is found in the host nucleus. The protein resides in the host cytoplasm. It localises to the virion. Its function is as follows. Endonuclease of the viral base excision repair system that catalyzes DNA cleavage reaction at the apurinic or apyrimidinic sites (AP sites). Cleaves phosphodiester bonds on the 5' side of AP sites. In addition to endonuclease activity, the AP endonuclease has a proofreading 3'-5' exonuclease activity that is considerably more efficient in the elimination of a mismatch than in that of a correctly paired base. Displays 3'-phosphatase and 3'-repair diesterase activities. The single nucleotide gaps generated by the AP endonuclease are filled by the viral repair DNA polymerase X and the DNA ligase. This chain is Probable AP endonuclease, found in Ornithodoros (relapsing fever ticks).